A 229-amino-acid polypeptide reads, in one-letter code: Ribosome maturation factor RimM (229 aa).

The 82-residue stretch at 148-229 (ADEFYWVDLI…RVVVDWEADY (82 aa)) folds into the PRC barrel domain.

This sequence belongs to the RimM family. As to quaternary structure, binds ribosomal protein uS19.

The protein localises to the cytoplasm. In terms of biological role, an accessory protein needed during the final step in the assembly of 30S ribosomal subunit, possibly for assembly of the head region. Essential for efficient processing of 16S rRNA. May be needed both before and after RbfA during the maturation of 16S rRNA. It has affinity for free ribosomal 30S subunits but not for 70S ribosomes. The polypeptide is Ribosome maturation factor RimM (Burkholderia pseudomallei (strain 1710b)).